A 360-amino-acid chain; its full sequence is Alpha-2-macroglobulin receptor-associated protein (360 aa).

The N-terminal stretch at 1-33 (MAPLRDRVSTLPRLQLLVLLLLPLLLVPQPIAG) is a signal peptide. Phosphoserine occurs at positions 53 and 138. Residues 222-302 (SKHSELKDRL…KHNHYQKQLE (81 aa)) are a coiled coil. The tract at residues 240–356 (RLRKVSHQGY…DLSSRVSRAR (117 aa)) is LDL receptor binding. The N-linked (GlcNAc...) asparagine glycan is linked to Asn-271. The short motif at 357 to 360 (HNEL) is the Prevents secretion from ER element.

Belongs to the alpha-2-MRAP family. Interacts with the LRP1/alpha-2-macroglobulin receptor heavy and light chains; the interaction is transient and coincides with a reduction of ligand binding by the receptor. Interacts with LRP2/glycoprotein 330. Interacts with LRP1B; binding is followed by internalization and degradation. Interacts with LDLR. Interacts with SORL1. Interacts with LRP1; this interaction is followed by rapid internalization. Post-translationally, N-glycosylated.

It is found in the rough endoplasmic reticulum lumen. Its subcellular location is the endoplasmic reticulum-Golgi intermediate compartment lumen. The protein resides in the golgi apparatus. The protein localises to the cis-Golgi network. It localises to the golgi apparatus lumen. It is found in the endosome lumen. Its subcellular location is the cell surface. Functionally, molecular chaperone for LDL receptor-related proteins that may regulate their ligand binding activity along the secretory pathway. This chain is Alpha-2-macroglobulin receptor-associated protein (Lrpap1), found in Rattus norvegicus (Rat).